A 124-amino-acid polypeptide reads, in one-letter code: Putative outer membrane protein TC_0858 (124 aa).

A signal peptide spans 1 to 31 (MGKTKKRKQSITLIEMMVVITLIGIISGALA).

It is found in the cell outer membrane. This chain is Putative outer membrane protein TC_0858, found in Chlamydia muridarum (strain MoPn / Nigg).